We begin with the raw amino-acid sequence, 60 residues long: MSKKLEITLNRSVIGGTGVQKKTVEALGLKKIRQSVVREDTPAVRGMVNRVSHLLTVKEV.

The protein belongs to the universal ribosomal protein uL30 family. In terms of assembly, part of the 50S ribosomal subunit.

The protein is Large ribosomal subunit protein uL30 of Oceanobacillus iheyensis (strain DSM 14371 / CIP 107618 / JCM 11309 / KCTC 3954 / HTE831).